Consider the following 273-residue polypeptide: NADPH-dependent 7-cyano-7-deazaguanine reductase (273 aa).

81 to 83 provides a ligand contact to substrate; the sequence is VES. 83-84 is a binding site for NADPH; that stretch reads SK. The active-site Thioimide intermediate is C179. Residue D186 is the Proton donor of the active site. 218-219 is a substrate binding site; sequence AE. NADPH is bound at residue 247 to 248; that stretch reads RG.

Belongs to the GTP cyclohydrolase I family. QueF type 2 subfamily. In terms of assembly, homodimer.

Its subcellular location is the cytoplasm. It catalyses the reaction 7-aminomethyl-7-carbaguanine + 2 NADP(+) = 7-cyano-7-deazaguanine + 2 NADPH + 3 H(+). It participates in tRNA modification; tRNA-queuosine biosynthesis. In terms of biological role, catalyzes the NADPH-dependent reduction of 7-cyano-7-deazaguanine (preQ0) to 7-aminomethyl-7-deazaguanine (preQ1). This is NADPH-dependent 7-cyano-7-deazaguanine reductase from Rickettsia bellii (strain OSU 85-389).